The chain runs to 296 residues: Protoheme IX farnesyltransferase (296 aa).

A run of 9 helical transmembrane segments spans residues 8–28 (VTKPGIIFGNLISVVGGFLLA), 35–55 (YPLFLATLVGVSLVVASGCVF), 84–104 (VSLVYATALGIAGFALLYIGA), 107–127 (LAMWLAVMGFVVYVGVYSLYM), 132–152 (VYGTLIGSLSGAAPPVIGYCA), 162–182 (LILLAIFSLWQMPHSYAIAIF), 208–228 (ITVYIVAFMIATLMLTLGGYA), 229–249 (GYKYLIVAAAVSVWWLGMALR), and 263–283 (LFVFSIVAITSLSVMMSIDFS).

The protein belongs to the UbiA prenyltransferase family. Protoheme IX farnesyltransferase subfamily.

It localises to the cell inner membrane. It catalyses the reaction heme b + (2E,6E)-farnesyl diphosphate + H2O = Fe(II)-heme o + diphosphate. It functions in the pathway porphyrin-containing compound metabolism; heme O biosynthesis; heme O from protoheme: step 1/1. Its function is as follows. Converts heme B (protoheme IX) to heme O by substitution of the vinyl group on carbon 2 of heme B porphyrin ring with a hydroxyethyl farnesyl side group. The protein is Protoheme IX farnesyltransferase of Serratia proteamaculans (strain 568).